A 143-amino-acid polypeptide reads, in one-letter code: Anti-sigma F factor (143 aa).

The protein belongs to the anti-sigma-factor family.

It catalyses the reaction L-seryl-[protein] + ATP = O-phospho-L-seryl-[protein] + ADP + H(+). The catalysed reaction is L-threonyl-[protein] + ATP = O-phospho-L-threonyl-[protein] + ADP + H(+). Its function is as follows. Binds to sigma F and blocks its ability to form an RNA polymerase holoenzyme (E-sigma F). Phosphorylates SpoIIAA on a serine residue. This phosphorylation may enable SpoIIAA to act as an anti-anti-sigma factor that counteracts SpoIIAB and thus releases sigma F from inhibition. In Thermoanaerobacter pseudethanolicus (strain ATCC 33223 / 39E) (Clostridium thermohydrosulfuricum), this protein is Anti-sigma F factor.